The chain runs to 28 residues: Phospholipase A2 pseudexin C chain (28 aa).

Residue Tyr28 coordinates Ca(2+).

This sequence belongs to the phospholipase A2 family. Group I subfamily. Ca(2+) serves as cofactor. In terms of tissue distribution, expressed by the venom gland.

It localises to the secreted. It catalyses the reaction a 1,2-diacyl-sn-glycero-3-phosphocholine + H2O = a 1-acyl-sn-glycero-3-phosphocholine + a fatty acid + H(+). Functionally, PLA2 catalyzes the calcium-dependent hydrolysis of the 2-acyl groups in 3-sn-phosphoglycerides. The chain is Phospholipase A2 pseudexin C chain from Pseudechis porphyriacus (Red-bellied black snake).